The chain runs to 152 residues: Deoxyuridine 5'-triphosphate nucleotidohydrolase (152 aa).

Substrate contacts are provided by residues 71-73, N84, 88-90, and M98; these read RSG and LID.

It belongs to the dUTPase family. It depends on Mg(2+) as a cofactor.

It catalyses the reaction dUTP + H2O = dUMP + diphosphate + H(+). It participates in pyrimidine metabolism; dUMP biosynthesis; dUMP from dCTP (dUTP route): step 2/2. In terms of biological role, this enzyme is involved in nucleotide metabolism: it produces dUMP, the immediate precursor of thymidine nucleotides and it decreases the intracellular concentration of dUTP so that uracil cannot be incorporated into DNA. The protein is Deoxyuridine 5'-triphosphate nucleotidohydrolase of Shewanella sp. (strain ANA-3).